Here is a 260-residue protein sequence, read N- to C-terminus: Cell wall synthesis protein Wag31 (260 aa).

A coiled-coil region spans residues 31–64 (FLDLVENELTRLIEENSDLRQRINELDQELAAGG). Phosphothreonine is present on threonine 73. Positions 161 to 196 (MLADAQSRSEAQLRQAQEKADALQADAERKHSEIMG) form a coiled coil. Residues 233–260 (ELGQRGSAAPVDSNADAGGFDQFNRGKN) are disordered.

Belongs to the DivIVA family. As to quaternary structure, forms homooligomers. Post-translationally, phosphorylated by PknA. Phosphorylation enhances polar localization, which in turn heightens polar peptidoglycan biosynthesis.

It localises to the cytoplasm. Important for maintaining cell shape and cell wall integrity by localizing peptidoglycan synthesis to the cell poles. The sequence is that of Cell wall synthesis protein Wag31 (wag31) from Mycobacterium tuberculosis (strain CDC 1551 / Oshkosh).